Here is a 380-residue protein sequence, read N- to C-terminus: Cytochrome b (380 aa).

4 consecutive transmembrane segments (helical) span residues 34 to 54, 78 to 99, 114 to 134, and 179 to 199; these read FGSLLGICLTMQILTGLLLAT, WLIRNLHANGASFFFICIYLHI, WNTGVILLLTLMATAFVGYVL, and FFALHFLLPFAIAGLTLIHLT. Residues His-84 and His-98 each coordinate heme b. Heme b is bound by residues His-183 and His-197. His-202 is an a ubiquinone binding site. A run of 4 helical transmembrane segments spans residues 227–247, 289–309, 321–341, and 348–368; these read LKDILGLTLLLLPLTTLALFS, LGGVLALAASVLILFLCPLLH, LSQLLFWTLTANLLILTWVGS, and FIIIGQLASLTYFFTLLILFP.

The protein belongs to the cytochrome b family. As to quaternary structure, the cytochrome bc1 complex contains 11 subunits: 3 respiratory subunits (MT-CYB, CYC1 and UQCRFS1), 2 core proteins (UQCRC1 and UQCRC2) and 6 low-molecular weight proteins (UQCRH/QCR6, UQCRB/QCR7, UQCRQ/QCR8, UQCR10/QCR9, UQCR11/QCR10 and a cleavage product of UQCRFS1). This cytochrome bc1 complex then forms a dimer. Requires heme b as cofactor.

It is found in the mitochondrion inner membrane. Its function is as follows. Component of the ubiquinol-cytochrome c reductase complex (complex III or cytochrome b-c1 complex) that is part of the mitochondrial respiratory chain. The b-c1 complex mediates electron transfer from ubiquinol to cytochrome c. Contributes to the generation of a proton gradient across the mitochondrial membrane that is then used for ATP synthesis. In Ciconia ciconia (White stork), this protein is Cytochrome b (MT-CYB).